We begin with the raw amino-acid sequence, 94 residues long: Large ribosomal subunit protein bL25 (94 aa).

This sequence belongs to the bacterial ribosomal protein bL25 family. In terms of assembly, part of the 50S ribosomal subunit; part of the 5S rRNA/L5/L18/L25 subcomplex. Contacts the 5S rRNA. Binds to the 5S rRNA independently of L5 and L18.

This is one of the proteins that binds to the 5S RNA in the ribosome where it forms part of the central protuberance. The polypeptide is Large ribosomal subunit protein bL25 (Cronobacter sakazakii (strain ATCC BAA-894) (Enterobacter sakazakii)).